Reading from the N-terminus, the 110-residue chain is Small ribosomal subunit protein uS10 (110 aa).

It belongs to the universal ribosomal protein uS10 family. In terms of assembly, part of the 30S ribosomal subunit.

In terms of biological role, involved in the binding of tRNA to the ribosomes. The chain is Small ribosomal subunit protein uS10 from Coxiella burnetii (strain Dugway 5J108-111).